A 257-amino-acid polypeptide reads, in one-letter code: UPF0246 protein Rsph17029_0026 (257 aa).

The protein belongs to the UPF0246 family.

The protein is UPF0246 protein Rsph17029_0026 of Cereibacter sphaeroides (strain ATCC 17029 / ATH 2.4.9) (Rhodobacter sphaeroides).